The chain runs to 1109 residues: Hybrid signal transduction histidine kinase F (1109 aa).

A PAC domain is found at Leu237 to Glu289. The region spanning Thr324–Gln547 is the Histidine kinase domain. His327 carries the phosphohistidine; by autocatalysis modification. The stretch at Ser719–Val760 forms a coiled coil. Residues Leu739 to Gln758 are compositionally biased toward low complexity. Residues Leu739 to Glu819 form a disordered region. Residues Asp767–Tyr782 show a composition bias toward basic and acidic residues. The region spanning Arg928–Leu1048 is the Response regulatory domain. The residue at position 977 (Asp977) is a 4-aspartylphosphate. The span at Asn1052–Asn1099 shows a compositional bias: low complexity. Residues Asn1052–Ile1109 form a disordered region. Positions Tyr1100 to Ile1109 are enriched in polar residues.

It carries out the reaction ATP + protein L-histidine = ADP + protein N-phospho-L-histidine.. Functionally, acts as a receptor histidine kinase for a signal transduction pathway. This protein undergoes an ATP-dependent autophosphorylation at a conserved histidine residue in the kinase core, and a phosphoryl group is then transferred to a conserved aspartate residue in the receiver domain. This Dictyostelium discoideum (Social amoeba) protein is Hybrid signal transduction histidine kinase F (dhkF).